The chain runs to 94 residues: Co-chaperonin GroES (94 aa).

This sequence belongs to the GroES chaperonin family. As to quaternary structure, heptamer of 7 subunits arranged in a ring. Interacts with the chaperonin GroEL.

The protein resides in the cytoplasm. Together with the chaperonin GroEL, plays an essential role in assisting protein folding. The GroEL-GroES system forms a nano-cage that allows encapsulation of the non-native substrate proteins and provides a physical environment optimized to promote and accelerate protein folding. GroES binds to the apical surface of the GroEL ring, thereby capping the opening of the GroEL channel. This is Co-chaperonin GroES from Shouchella clausii (strain KSM-K16) (Alkalihalobacillus clausii).